Reading from the N-terminus, the 125-residue chain is uncharacterized protein (125 aa).

It localises to the plastid. The protein resides in the chloroplast. This is an uncharacterized protein from Guillardia theta (Cryptophyte).